The chain runs to 159 residues: Secreted RxLR effector protein 50 (159 aa).

The first 19 residues, M1–G19, serve as a signal peptide directing secretion. The RxLR-dEER motif lies at R38 to R54.

Belongs to the RxLR effector family.

Its subcellular location is the secreted. The protein localises to the host nucleus. The protein resides in the host cytoplasm. Its function is as follows. Secreted effector that completely suppresses the host cell death induced by cell death-inducing proteins. This Plasmopara viticola (Downy mildew of grapevine) protein is Secreted RxLR effector protein 50.